The sequence spans 435 residues: Trigger factor (435 aa).

Residues 161–246 (GKRVSIDFVG…VNKVEARELP (86 aa)) enclose the PPIase FKBP-type domain.

This sequence belongs to the FKBP-type PPIase family. Tig subfamily.

It is found in the cytoplasm. It catalyses the reaction [protein]-peptidylproline (omega=180) = [protein]-peptidylproline (omega=0). Involved in protein export. Acts as a chaperone by maintaining the newly synthesized protein in an open conformation. Functions as a peptidyl-prolyl cis-trans isomerase. In Vibrio campbellii (strain ATCC BAA-1116), this protein is Trigger factor.